Reading from the N-terminus, the 178-residue chain is Large ribosomal subunit protein uL6 (178 aa).

Belongs to the universal ribosomal protein uL6 family. As to quaternary structure, part of the 50S ribosomal subunit.

Its function is as follows. This protein binds to the 23S rRNA, and is important in its secondary structure. It is located near the subunit interface in the base of the L7/L12 stalk, and near the tRNA binding site of the peptidyltransferase center. In Wolinella succinogenes (strain ATCC 29543 / DSM 1740 / CCUG 13145 / JCM 31913 / LMG 7466 / NCTC 11488 / FDC 602W) (Vibrio succinogenes), this protein is Large ribosomal subunit protein uL6.